The sequence spans 292 residues: Acetyl-coenzyme A carboxylase carboxyl transferase subunit beta (292 aa).

A CoA carboxyltransferase N-terminal domain is found at valine 35–serine 292. Residues cysteine 39, cysteine 42, cysteine 58, and cysteine 61 each coordinate Zn(2+). A C4-type zinc finger spans residues cysteine 39–cysteine 61.

Belongs to the AccD/PCCB family. In terms of assembly, acetyl-CoA carboxylase is a heterohexamer composed of biotin carboxyl carrier protein (AccB), biotin carboxylase (AccC) and two subunits each of ACCase subunit alpha (AccA) and ACCase subunit beta (AccD). Zn(2+) serves as cofactor.

The protein localises to the cytoplasm. It catalyses the reaction N(6)-carboxybiotinyl-L-lysyl-[protein] + acetyl-CoA = N(6)-biotinyl-L-lysyl-[protein] + malonyl-CoA. It functions in the pathway lipid metabolism; malonyl-CoA biosynthesis; malonyl-CoA from acetyl-CoA: step 1/1. Functionally, component of the acetyl coenzyme A carboxylase (ACC) complex. Biotin carboxylase (BC) catalyzes the carboxylation of biotin on its carrier protein (BCCP) and then the CO(2) group is transferred by the transcarboxylase to acetyl-CoA to form malonyl-CoA. This chain is Acetyl-coenzyme A carboxylase carboxyl transferase subunit beta, found in Acholeplasma laidlawii (strain PG-8A).